Consider the following 333-residue polypeptide: Ketol-acid reductoisomerase (NADP(+)) (333 aa).

One can recognise a KARI N-terminal Rossmann domain in the interval 1–181; the sequence is MKVYYDQDAD…GGARSGVIET (181 aa). Residues 24–27, Arg47, and 82–85 each bind NADP(+); these read YGSQ and DEVQ. His107 is a catalytic residue. Gly133 serves as a coordination point for NADP(+). A KARI C-terminal knotted domain is found at 182-327; it reads TFREETETDL…KELRSMMPWL (146 aa). Residues Asp190, Glu194, Glu226, and Glu230 each coordinate Mg(2+). A substrate-binding site is contributed by Ser251.

It belongs to the ketol-acid reductoisomerase family. It depends on Mg(2+) as a cofactor.

It carries out the reaction (2R)-2,3-dihydroxy-3-methylbutanoate + NADP(+) = (2S)-2-acetolactate + NADPH + H(+). The catalysed reaction is (2R,3R)-2,3-dihydroxy-3-methylpentanoate + NADP(+) = (S)-2-ethyl-2-hydroxy-3-oxobutanoate + NADPH + H(+). It functions in the pathway amino-acid biosynthesis; L-isoleucine biosynthesis; L-isoleucine from 2-oxobutanoate: step 2/4. The protein operates within amino-acid biosynthesis; L-valine biosynthesis; L-valine from pyruvate: step 2/4. In terms of biological role, involved in the biosynthesis of branched-chain amino acids (BCAA). Catalyzes an alkyl-migration followed by a ketol-acid reduction of (S)-2-acetolactate (S2AL) to yield (R)-2,3-dihydroxy-isovalerate. In the isomerase reaction, S2AL is rearranged via a Mg-dependent methyl migration to produce 3-hydroxy-3-methyl-2-ketobutyrate (HMKB). In the reductase reaction, this 2-ketoacid undergoes a metal-dependent reduction by NADPH to yield (R)-2,3-dihydroxy-isovalerate. This is Ketol-acid reductoisomerase (NADP(+)) from Desulfovibrio desulfuricans (strain ATCC 27774 / DSM 6949 / MB).